Reading from the N-terminus, the 121-residue chain is Large ribosomal subunit protein bL12 (121 aa).

Belongs to the bacterial ribosomal protein bL12 family. As to quaternary structure, homodimer. Part of the ribosomal stalk of the 50S ribosomal subunit. Forms a multimeric L10(L12)X complex, where L10 forms an elongated spine to which 2 to 4 L12 dimers bind in a sequential fashion. Binds GTP-bound translation factors.

In terms of biological role, forms part of the ribosomal stalk which helps the ribosome interact with GTP-bound translation factors. Is thus essential for accurate translation. The protein is Large ribosomal subunit protein bL12 of Lachnospira eligens (strain ATCC 27750 / DSM 3376 / VPI C15-48 / C15-B4) (Eubacterium eligens).